The following is a 236-amino-acid chain: Peptidase E (236 aa).

Active-site charge relay system residues include serine 122, aspartate 137, and histidine 159.

It belongs to the peptidase S51 family.

The protein resides in the cytoplasm. The catalysed reaction is Dipeptidase E catalyzes the hydrolysis of dipeptides Asp-|-Xaa. It does not act on peptides with N-terminal Glu, Asn or Gln, nor does it cleave isoaspartyl peptides.. Hydrolyzes dipeptides containing N-terminal aspartate residues. May play a role in allowing the cell to use peptide aspartate to spare carbon otherwise required for the synthesis of the aspartate family of amino acids. In Shewanella oneidensis (strain ATCC 700550 / JCM 31522 / CIP 106686 / LMG 19005 / NCIMB 14063 / MR-1), this protein is Peptidase E.